A 520-amino-acid polypeptide reads, in one-letter code: 2-isopropylmalate synthase (520 aa).

One can recognise a Pyruvate carboxyltransferase domain in the interval 5 to 267 (VIIFDTTLRD…YTNINHQEIY (263 aa)). Mn(2+) contacts are provided by aspartate 14, histidine 202, histidine 204, and asparagine 238. Residues 392–520 (HLDNFNIQSG…RIQQNTKEMV (129 aa)) are regulatory domain.

The protein belongs to the alpha-IPM synthase/homocitrate synthase family. LeuA type 1 subfamily. As to quaternary structure, homodimer. Mn(2+) is required as a cofactor.

It is found in the cytoplasm. The catalysed reaction is 3-methyl-2-oxobutanoate + acetyl-CoA + H2O = (2S)-2-isopropylmalate + CoA + H(+). It participates in amino-acid biosynthesis; L-leucine biosynthesis; L-leucine from 3-methyl-2-oxobutanoate: step 1/4. Its function is as follows. Catalyzes the condensation of the acetyl group of acetyl-CoA with 3-methyl-2-oxobutanoate (2-ketoisovalerate) to form 3-carboxy-3-hydroxy-4-methylpentanoate (2-isopropylmalate). This Photorhabdus laumondii subsp. laumondii (strain DSM 15139 / CIP 105565 / TT01) (Photorhabdus luminescens subsp. laumondii) protein is 2-isopropylmalate synthase.